The following is a 234-amino-acid chain: UPF0173 metal-dependent hydrolase RHE_CH01853 (234 aa).

It belongs to the UPF0173 family.

The sequence is that of UPF0173 metal-dependent hydrolase RHE_CH01853 from Rhizobium etli (strain ATCC 51251 / DSM 11541 / JCM 21823 / NBRC 15573 / CFN 42).